We begin with the raw amino-acid sequence, 257 residues long: Deoxyribose-phosphate aldolase (257 aa).

D102 functions as the Proton donor/acceptor in the catalytic mechanism. The active-site Schiff-base intermediate with acetaldehyde is the K166. The Proton donor/acceptor role is filled by K198.

Belongs to the DeoC/FbaB aldolase family. DeoC type 2 subfamily.

The protein resides in the cytoplasm. It carries out the reaction 2-deoxy-D-ribose 5-phosphate = D-glyceraldehyde 3-phosphate + acetaldehyde. Its pathway is carbohydrate degradation; 2-deoxy-D-ribose 1-phosphate degradation; D-glyceraldehyde 3-phosphate and acetaldehyde from 2-deoxy-alpha-D-ribose 1-phosphate: step 2/2. Functionally, catalyzes a reversible aldol reaction between acetaldehyde and D-glyceraldehyde 3-phosphate to generate 2-deoxy-D-ribose 5-phosphate. In Shewanella amazonensis (strain ATCC BAA-1098 / SB2B), this protein is Deoxyribose-phosphate aldolase.